We begin with the raw amino-acid sequence, 743 residues long: Keratin, type I cytoskeletal 9 (743 aa).

Residues 1 to 16 show a composition bias toward low complexity; it reads MSCRQSSSSFWSSSSS. The segment at 1 to 46 is disordered; sequence MSCRQSSSSFWSSSSSCGGGGGRGGSGGSMRSSFSRSSRAGGGGGG. The segment at 1-130 is head; it reads MSCRQSSSSF…GGEGGILNTN (130 aa). A phosphoserine mark is found at serine 14 and serine 16. Positions 17–28 are enriched in gly residues; it reads CGGGGGRGGSGG. Residues 29 to 39 are compositionally biased toward low complexity; it reads SMRSSFSRSSR. Phosphoserine is present on residues serine 55 and serine 155. The segment at 131–166 is coil 1A; the sequence is EKIVMQNLNSRLASYMEKVLELEESNTAMEKQIQDW. In terms of domain architecture, IF rod spans 131–443; the sequence is EKIVMQNLNS…ELLEGGQQDF (313 aa). The segment at 167-185 is linker 1; sequence YSKRGPKVFQKDNTHYYDT. A coil 1B region spans residues 186 to 277; sequence IEDLKDRIVD…KNHKEEMSQL (92 aa). The interval 278-300 is linker 12; that stretch reads TGQNDGDVNVEINVAPSTDLTRV. The segment at 301-439 is coil 2; the sequence is LNDMREEYEQ…ETYRELLEGG (139 aa). Disordered stretches follow at residues 440 to 468 and 501 to 743; these read QQDF…GSYG and GGSG…KMRY. Positions 440–709 are tail; that stretch reads QQDFESSGAG…GGGSGSGGGS (270 aa). 2 stretches are compositionally biased toward gly residues: residues 449–468 and 501–717; these read GQIG…GSYG and GGSG…GGGN.

It belongs to the intermediate filament family. As to quaternary structure, heterotetramer of two type I and two type II keratins. Expressed in footpad epidermis and testis (at protein level).

May serve an important special function either in the mature palmar and plantar skin tissue or in the morphogenetic program of the formation of these tissues. Plays a role in keratin filament assembly. Plays an essential role in the correct development of sperm. This is Keratin, type I cytoskeletal 9 from Mus musculus (Mouse).